Reading from the N-terminus, the 150-residue chain is Urease accessory protein UreE (150 aa).

The protein belongs to the UreE family.

Its subcellular location is the cytoplasm. Functionally, involved in urease metallocenter assembly. Binds nickel. Probably functions as a nickel donor during metallocenter assembly. In Streptococcus vestibularis, this protein is Urease accessory protein UreE.